A 510-amino-acid chain; its full sequence is ATP synthase subunit alpha (510 aa).

170-177 (GDRQTGKT) serves as a coordination point for ATP.

It belongs to the ATPase alpha/beta chains family. F-type ATPases have 2 components, CF(1) - the catalytic core - and CF(0) - the membrane proton channel. CF(1) has five subunits: alpha(3), beta(3), gamma(1), delta(1), epsilon(1). CF(0) has three main subunits: a(1), b(2) and c(9-12). The alpha and beta chains form an alternating ring which encloses part of the gamma chain. CF(1) is attached to CF(0) by a central stalk formed by the gamma and epsilon chains, while a peripheral stalk is formed by the delta and b chains.

It localises to the cell inner membrane. It carries out the reaction ATP + H2O + 4 H(+)(in) = ADP + phosphate + 5 H(+)(out). Functionally, produces ATP from ADP in the presence of a proton gradient across the membrane. The alpha chain is a regulatory subunit. In Dictyoglomus thermophilum (strain ATCC 35947 / DSM 3960 / H-6-12), this protein is ATP synthase subunit alpha.